A 70-amino-acid chain; its full sequence is Large ribosomal subunit protein bL28 (70 aa).

The segment at 1–26 is disordered; that stretch reads MAKRCEVCGKAPRSGNTVSHSDKKSG.

The protein belongs to the bacterial ribosomal protein bL28 family.

The protein is Large ribosomal subunit protein bL28 (rpmB) of Thermotoga maritima (strain ATCC 43589 / DSM 3109 / JCM 10099 / NBRC 100826 / MSB8).